Consider the following 525-residue polypeptide: GMP synthase [glutamine-hydrolyzing] (525 aa).

The region spanning 13–202 is the Glutamine amidotransferase type-1 domain; the sequence is TILVLDFGSQ…AVDLCHAKQN (190 aa). Cys-89 functions as the Nucleophile in the catalytic mechanism. Residues His-176 and Glu-178 contribute to the active site. Residues 203–400 form the GMPS ATP-PPase domain; that stretch reads WTMKNFIGTE…LGISHELVWR (198 aa). Residue 231–237 coordinates ATP; the sequence is SGGVDST. Residues Arg-304, Asp-462, Lys-517, and Glu-523 each coordinate XMP.

In terms of assembly, homodimer. It depends on Mg(2+) as a cofactor.

It localises to the cytoplasm. Its subcellular location is the cytosol. The enzyme catalyses XMP + L-glutamine + ATP + H2O = GMP + L-glutamate + AMP + diphosphate + 2 H(+). It participates in purine metabolism; GMP biosynthesis; GMP from XMP (L-Gln route): step 1/1. Its function is as follows. Catalyzes the conversion of xanthine monophosphate (XMP) to GMP in the presence of glutamine and ATP through an adenyl-XMP intermediate. The chain is GMP synthase [glutamine-hydrolyzing] (GUA1) from Candida glabrata (strain ATCC 2001 / BCRC 20586 / JCM 3761 / NBRC 0622 / NRRL Y-65 / CBS 138) (Yeast).